We begin with the raw amino-acid sequence, 299 residues long: Coenzyme PQQ synthesis protein B (299 aa).

Belongs to the PqqB family.

It functions in the pathway cofactor biosynthesis; pyrroloquinoline quinone biosynthesis. In terms of biological role, may be involved in the transport of PQQ or its precursor to the periplasm. This chain is Coenzyme PQQ synthesis protein B, found in Methylorubrum extorquens (strain ATCC 14718 / DSM 1338 / JCM 2805 / NCIMB 9133 / AM1) (Methylobacterium extorquens).